A 535-amino-acid chain; its full sequence is Beta-amylase (535 aa).

Positions 51, 91, and 99 each coordinate substrate. E184 functions as the Proton donor in the catalytic mechanism. Substrate is bound by residues K293, H298, and T340. The active-site Proton acceptor is E378. Substrate is bound by residues 379–380 and R418; that span reads NA. A run of 3 repeats spans residues 489–499, 500–510, and 511–521. Residues 489-532 are 4 X 11 AA tandem repeats; sequence GPTGGMGGQAEGPTCGMGGQVKGPTGGMGGQAEDPTSGIGGELP. Positions 513-535 are disordered; sequence TGGMGGQAEDPTSGIGGELPATM. One copy of the 4; approximate repeat lies at 522-532; the sequence is DPTSGIGGELP.

Belongs to the glycosyl hydrolase 14 family. As to quaternary structure, monomer.

It carries out the reaction Hydrolysis of (1-&gt;4)-alpha-D-glucosidic linkages in polysaccharides so as to remove successive maltose units from the non-reducing ends of the chains.. In Hordeum vulgare (Barley), this protein is Beta-amylase (BMY1).